A 252-amino-acid chain; its full sequence is MEVRPIGWICGQVVKNFSGRLEGLQKAIMDLIDEFKDDLPTILRLSQSSQKTDPVQKTSKVRMALALAKINRGTLIQGLNHISSSSKSVAKLLQPRLAYRLLELRSISHRLLREVNVASQPLHSVQMKRGSLFEIISFPAKTALTSIMYASYAALIYLAVCVNAVLAKIKKIFQEEESIRQNRESENFRKAFSEPALRKPMFSESEIKAKPYRSLPEKPDNLLDQPKPPANKQSNKIQVLHSVFDQLAELNE.

Residues 145 to 167 (TSIMYASYAALIYLAVCVNAVLA) form a helical membrane-spanning segment. The span at 208 to 221 (KAKPYRSLPEKPDN) shows a compositional bias: basic and acidic residues. The disordered stretch occupies residues 208-235 (KAKPYRSLPEKPDNLLDQPKPPANKQSN).

It is found in the membrane. Functionally, may play at role in testicular development/spermatogenesis and may be an important factor in male infertility. The chain is Spermatogenesis-associated protein 9 (Spata9) from Mus musculus (Mouse).